Here is a 170-residue protein sequence, read N- to C-terminus: Probable peptide methionine sulfoxide reductase (170 aa).

Belongs to the MsrA Met sulfoxide reductase family.

The protein resides in the cytoplasm. The protein localises to the nucleus. It carries out the reaction L-methionyl-[protein] + [thioredoxin]-disulfide + H2O = L-methionyl-(S)-S-oxide-[protein] + [thioredoxin]-dithiol. The catalysed reaction is [thioredoxin]-disulfide + L-methionine + H2O = L-methionine (S)-S-oxide + [thioredoxin]-dithiol. Functionally, has an important function as a repair enzyme for proteins that have been inactivated by oxidation. Catalyzes the reversible oxidation-reduction of methionine sulfoxide in proteins to methionine. The protein is Probable peptide methionine sulfoxide reductase (mxr1) of Schizosaccharomyces pombe (strain 972 / ATCC 24843) (Fission yeast).